Consider the following 1417-residue polypeptide: DNA-directed RNA polymerase subunit beta' (1417 aa).

4 residues coordinate Zn(2+): Cys68, Cys70, Cys83, and Cys86. 3 residues coordinate Mg(2+): Asp458, Asp460, and Asp462. Cys811, Cys884, Cys891, and Cys894 together coordinate Zn(2+).

It belongs to the RNA polymerase beta' chain family. In terms of assembly, the RNAP catalytic core consists of 2 alpha, 1 beta, 1 beta' and 1 omega subunit. When a sigma factor is associated with the core the holoenzyme is formed, which can initiate transcription. It depends on Mg(2+) as a cofactor. Zn(2+) serves as cofactor.

It carries out the reaction RNA(n) + a ribonucleoside 5'-triphosphate = RNA(n+1) + diphosphate. In terms of biological role, DNA-dependent RNA polymerase catalyzes the transcription of DNA into RNA using the four ribonucleoside triphosphates as substrates. The chain is DNA-directed RNA polymerase subunit beta' from Francisella tularensis subsp. novicida (strain U112).